Reading from the N-terminus, the 236-residue chain is Purine nucleoside phosphorylase DeoD-type 2 (236 aa).

His5 is an a purine D-ribonucleoside binding site. Phosphate-binding positions include Gly21, Arg25, Arg44, and 88–91 (RVGS). A purine D-ribonucleoside contacts are provided by residues 180–182 (DME) and 204–205 (SD). Residue Asp205 is the Proton donor of the active site.

It belongs to the PNP/UDP phosphorylase family. Homohexamer; trimer of homodimers.

It carries out the reaction a purine D-ribonucleoside + phosphate = a purine nucleobase + alpha-D-ribose 1-phosphate. It catalyses the reaction a purine 2'-deoxy-D-ribonucleoside + phosphate = a purine nucleobase + 2-deoxy-alpha-D-ribose 1-phosphate. Functionally, catalyzes the reversible phosphorolytic breakdown of the N-glycosidic bond in the beta-(deoxy)ribonucleoside molecules, with the formation of the corresponding free purine bases and pentose-1-phosphate. In Vibrio parahaemolyticus serotype O3:K6 (strain RIMD 2210633), this protein is Purine nucleoside phosphorylase DeoD-type 2.